The sequence spans 723 residues: Dipeptidyl aminopeptidase BI (723 aa).

The signal sequence occupies residues 1–23 (MKPTSLLLAATVLMSTPITSALA). Residues S574, D659, and H694 each act as charge relay system in the active site.

This sequence belongs to the peptidase S9A family. In terms of assembly, monomer.

Nearly completely inhibited by 0.5 mM ZnCl(2), 0.1 mM N-tosyl-L-lysyl chloromethyl ketone (TLCK) and 0.1 mM leupeptin. Strongly inhibited by 0.5 mM CoCl(2) and 0.1 mM chymostatin. Activity is hardly affected by general serine protease inhibitors phenylmethanesulfonyl fluoride (PMSF), diisopropyl fluorophosphate (DFP) and N-tosyl-L-phenyl-alanyl chloromethyl ketone (TPCK) or by aspartyl protease inhibitor pepstatin A or by CaCl(2) and EDTA. Cysteine protease inhibitors, such as N-ethylmaleimide (NEM), iodoacetic acid and L-trans-epoxysuccinyl-leucylamido(4-guanido)butane (E-64) have no effect on activity. Sequentially removes dipeptide units (NH3-P2-P1-) from the amino termini of peptides and proteins. Is able to catalyze the removal of Asp-Arg from the amino termini of angiotensins I and II. Has slight endopeptidase activity on N-terminally blocked peptide derivatives which contain arginine residues at the P1 position. Does not hydrolyze Ala-Ala-Ala and Ala-Ala-Ala-Ala substrates or insulin beta chain. The protein is Dipeptidyl aminopeptidase BI of Pseudoxanthomonas mexicana.